Consider the following 71-residue polypeptide: Large ribosomal subunit protein uL30 (71 aa).

This sequence belongs to the universal ribosomal protein uL30 family. Part of the 50S ribosomal subunit.

This is Large ribosomal subunit protein uL30 from Borreliella burgdorferi (strain ATCC 35210 / DSM 4680 / CIP 102532 / B31) (Borrelia burgdorferi).